Consider the following 417-residue polypeptide: Serine hydroxymethyltransferase (417 aa).

(6S)-5,6,7,8-tetrahydrofolate is bound by residues L119 and 123–125 (GHL). K227 is modified (N6-(pyridoxal phosphate)lysine).

Belongs to the SHMT family. In terms of assembly, homodimer. Pyridoxal 5'-phosphate is required as a cofactor.

The protein resides in the cytoplasm. It carries out the reaction (6R)-5,10-methylene-5,6,7,8-tetrahydrofolate + glycine + H2O = (6S)-5,6,7,8-tetrahydrofolate + L-serine. The protein operates within one-carbon metabolism; tetrahydrofolate interconversion. It functions in the pathway amino-acid biosynthesis; glycine biosynthesis; glycine from L-serine: step 1/1. In terms of biological role, catalyzes the reversible interconversion of serine and glycine with tetrahydrofolate (THF) serving as the one-carbon carrier. This reaction serves as the major source of one-carbon groups required for the biosynthesis of purines, thymidylate, methionine, and other important biomolecules. Also exhibits THF-independent aldolase activity toward beta-hydroxyamino acids, producing glycine and aldehydes, via a retro-aldol mechanism. This is Serine hydroxymethyltransferase from Buchnera aphidicola subsp. Cinara cedri (strain Cc).